The following is a 306-amino-acid chain: Aspartate carbamoyltransferase catalytic subunit (306 aa).

The carbamoyl phosphate site is built by Arg55 and Thr56. Lys84 lines the L-aspartate pocket. Arg105, His133, and Gln136 together coordinate carbamoyl phosphate. Positions 166 and 227 each coordinate L-aspartate. Carbamoyl phosphate contacts are provided by Leu265 and Pro266.

This sequence belongs to the aspartate/ornithine carbamoyltransferase superfamily. ATCase family. In terms of assembly, heterododecamer (2C3:3R2) of six catalytic PyrB chains organized as two trimers (C3), and six regulatory PyrI chains organized as three dimers (R2).

It catalyses the reaction carbamoyl phosphate + L-aspartate = N-carbamoyl-L-aspartate + phosphate + H(+). It functions in the pathway pyrimidine metabolism; UMP biosynthesis via de novo pathway; (S)-dihydroorotate from bicarbonate: step 2/3. Catalyzes the condensation of carbamoyl phosphate and aspartate to form carbamoyl aspartate and inorganic phosphate, the committed step in the de novo pyrimidine nucleotide biosynthesis pathway. In Neisseria meningitidis serogroup C (strain 053442), this protein is Aspartate carbamoyltransferase catalytic subunit.